The primary structure comprises 124 residues: uncharacterized protein (124 aa).

Residues 42–118 enclose the GIY-YIG domain; the sequence is DKGGIFMFYN…INTQHSKYNI (77 aa).

This is an uncharacterized protein from Bacillus subtilis (strain 168).